The following is a 219-amino-acid chain: Ribose-5-phosphate isomerase A (219 aa).

Substrate contacts are provided by residues 28-31, 81-84, and 94-97; these read TGST, DGAD, and KGGG. Glutamate 103 functions as the Proton acceptor in the catalytic mechanism. Lysine 121 is a binding site for substrate.

This sequence belongs to the ribose 5-phosphate isomerase family. As to quaternary structure, homodimer.

It catalyses the reaction aldehydo-D-ribose 5-phosphate = D-ribulose 5-phosphate. Its pathway is carbohydrate degradation; pentose phosphate pathway; D-ribose 5-phosphate from D-ribulose 5-phosphate (non-oxidative stage): step 1/1. Functionally, catalyzes the reversible conversion of ribose-5-phosphate to ribulose 5-phosphate. The chain is Ribose-5-phosphate isomerase A from Pectobacterium atrosepticum (strain SCRI 1043 / ATCC BAA-672) (Erwinia carotovora subsp. atroseptica).